Consider the following 223-residue polypeptide: Neurotrophic factor BDNF precursor form (223 aa).

Residues 1-5 (SCMKA) form the signal peptide. The propeptide occupies 6–114 (APMKEVSIRG…AANMSMRVRR (109 aa)). Asn-107 carries N-linked (GlcNAc...) asparagine glycosylation. Cystine bridges form between Cys-127-Cys-194 and Cys-172-Cys-223.

The protein belongs to the NGF-beta family.

Its subcellular location is the secreted. Its function is as follows. Promotes the survival of neuronal populations that are all located either in the central nervous system or directly connected to it. The protein is Neurotrophic factor BDNF precursor form (BDNF) of Aspidites melanocephalus (Black-headed python).